A 382-amino-acid chain; its full sequence is Lipid-A-disaccharide synthase (382 aa).

Belongs to the LpxB family.

It carries out the reaction a lipid X + a UDP-2-N,3-O-bis[(3R)-3-hydroxyacyl]-alpha-D-glucosamine = a lipid A disaccharide + UDP + H(+). Its pathway is bacterial outer membrane biogenesis; LPS lipid A biosynthesis. Its function is as follows. Condensation of UDP-2,3-diacylglucosamine and 2,3-diacylglucosamine-1-phosphate to form lipid A disaccharide, a precursor of lipid A, a phosphorylated glycolipid that anchors the lipopolysaccharide to the outer membrane of the cell. This chain is Lipid-A-disaccharide synthase, found in Alteromonas mediterranea (strain DSM 17117 / CIP 110805 / LMG 28347 / Deep ecotype).